Reading from the N-terminus, the 330-residue chain is MESVAAESSPALENEHFQETPESNNSVYTSFMKSHRCYDLIPTSSKLVVFDTSLQVKKAFFALVTNGVRAAPLWDSKKQSFVGMLTITDFINILHRYYKSALVQIYELEEHKIETWREVYLQDSFKPLVCISPNASLFDAVSSLIRNKIHRLPVIDPESGNTLYILTHKRILKFLKLFITEFPKPEFMSKSLQELQIGTYANIAMVRTTTPVYVALGIFVQHRVSALPVVDEKGRVVDIYSKFDVINLAAEKTYNNLDVSVTKALQHRSHYFEGVLKCYLHETLETIINRLVEAEVHRLVVVDEHDVVKGIVSLSDILQALVLTGGEKKP.

Residues 1 to 21 (MESVAAESSPALENEHFQETP) are disordered. 3 consecutive CBS domains span residues 42-102 (PTSS…KSAL), 124-186 (SFKP…PKPE), and 197-259 (IGTY…NLDV). ADP contacts are provided by residues Arg-69, 84–89 (MLTITD), Val-129, 150–151 (HR), and Lys-169. Residues Arg-69, 84–89 (MLTITD), Val-129, His-150, 150–151 (HR), Lys-169, Thr-199, Ala-204, 225–226 (SA), and 241–244 (SKFD) contribute to the AMP site. ATP-binding positions include Arg-69, 84–89 (MLTITD), Val-129, 150–151 (HR), Arg-151, and Lys-169. The AMPK pseudosubstrate signature appears at 137–158 (LFDAVSSLIRNKIHRLPVIDPE). 241 to 244 (SKFD) is a binding site for ADP. 241–244 (SKFD) provides a ligand contact to ATP. Ser-260 is subject to Phosphoserine; by ULK1. Thr-262 bears the Phosphothreonine; by ULK1 mark. Arg-268 contacts ADP. Arg-268 contributes to the AMP binding site. An ATP-binding site is contributed by Arg-268. Residue Ser-269 is modified to Phosphoserine; by ULK1. The 58-residue stretch at 271–328 (YFEGVLKCYLHETLETIINRLVEAEVHRLVVVDEHDVVKGIVSLSDILQALVLTGGEK) folds into the CBS 4 domain. Residues Leu-276 and 297–298 (HR) contribute to the ADP site. Residues Leu-276, His-297, 297 to 298 (HR), and 313 to 316 (SLSD) contribute to the AMP site. Residues Leu-276 and 297 to 298 (HR) contribute to the ATP site.

This sequence belongs to the 5'-AMP-activated protein kinase gamma subunit family. As to quaternary structure, AMPK is a heterotrimer of an alpha catalytic subunit (PRKAA1 or PRKAA2), a beta (PRKAB1 or PRKAB2) and a gamma non-catalytic subunits (PRKAG1, PRKAG2 or PRKAG3). Interacts with FNIP1 and FNIP2. Phosphorylated by ULK1 and ULK2; leading to negatively regulate AMPK activity and suggesting the existence of a regulatory feedback loop between ULK1, ULK2 and AMPK. In terms of processing, glycosylated; O-GlcNAcylated by OGT, promoting the AMP-activated protein kinase (AMPK) activity.

Its function is as follows. AMP/ATP-binding subunit of AMP-activated protein kinase (AMPK), an energy sensor protein kinase that plays a key role in regulating cellular energy metabolism. In response to reduction of intracellular ATP levels, AMPK activates energy-producing pathways and inhibits energy-consuming processes: inhibits protein, carbohydrate and lipid biosynthesis, as well as cell growth and proliferation. AMPK acts via direct phosphorylation of metabolic enzymes, and by longer-term effects via phosphorylation of transcription regulators. Also acts as a regulator of cellular polarity by remodeling the actin cytoskeleton; probably by indirectly activating myosin. Gamma non-catalytic subunit mediates binding to AMP, ADP and ATP, leading to activate or inhibit AMPK: AMP-binding results in allosteric activation of alpha catalytic subunit (PRKAA1 or PRKAA2) both by inducing phosphorylation and preventing dephosphorylation of catalytic subunits. ADP also stimulates phosphorylation, without stimulating already phosphorylated catalytic subunit. ATP promotes dephosphorylation of catalytic subunit, rendering the AMPK enzyme inactive. This Mus musculus (Mouse) protein is 5'-AMP-activated protein kinase subunit gamma-1 (Prkag1).